We begin with the raw amino-acid sequence, 539 residues long: Beta-apo-4'-carotenal oxygenase (539 aa).

Catalysis depends on residues Glu-228 and Cys-262.

The protein belongs to the aldehyde dehydrogenase family.

It carries out the reaction 4'-apo-beta-carotenal + NAD(+) + H2O = neurosporaxanthin + NADH + 2 H(+). Beta-apo-4'-carotenal oxygenase involved in the last step of synthesis of neurosporaxanthin, a carboxylic apocarotenoid acting as an essential protective pigments and leading to orange pigmentation. Converts the aldehyde beta-apo-4'-carotenal into neurosporaxanthin. Is also able to use shorter apocarotenals as substrates (such as beta-apo-8'-carotenal (C30), beta-apo-10'-carotenal (C27), or the acyclic apocarotenal apo-8'-lycopenal (C30)), indicating wide substrate specificity. Neurosporaxanthin is synthesized from geranyl-geranyl pyrophosphate (GGPP) through several enzymatic activities. Phytoene synthase activity performed by the bifunctional enzyme carAR first produces phytoene from geranyl-geranyl pyrophosphate (GGPP). The phytoene dehydrogenase carB then introduces 4 desaturations to lead to lycopene which is substrate of the carotene cyclase activity of carAR that leads to the production of gamma-carotene. CarB then performs a 5th desaturation reaction to yield torulene. Torulene is the substrate of the dioxidase carT that breaks the molecule, removing five carbon atoms to yield beta-apo-4'-carotenal, whereas the aldehyde dehydrogenase carD mediates the last step by converting beta-apo-4'-carotenal into neurosporaxanthin. The chain is Beta-apo-4'-carotenal oxygenase from Gibberella fujikuroi (strain CBS 195.34 / IMI 58289 / NRRL A-6831) (Bakanae and foot rot disease fungus).